The sequence spans 118 residues: UPF0295 protein BCE33L0445 (118 aa).

2 helical membrane-spanning segments follow: residues 12 to 32 (IRTFALSLVFIGLFIAYLGVF) and 43 to 63 (FMMVGFLAVIASTVVYFWIGM).

The protein belongs to the UPF0295 family.

It localises to the cell membrane. This Bacillus cereus (strain ZK / E33L) protein is UPF0295 protein BCE33L0445.